A 327-amino-acid polypeptide reads, in one-letter code: uncharacterized protein (327 aa).

Positions 1–24 (MKQPGFIRLATLALLSTLSFFSHG) are cleaved as a signal peptide.

This is an uncharacterized protein from Salmonella typhimurium (strain LT2 / SGSC1412 / ATCC 700720).